Reading from the N-terminus, the 478-residue chain is Aspartyl/glutamyl-tRNA(Asn/Gln) amidotransferase subunit B (478 aa).

It belongs to the GatB/GatE family. GatB subfamily. In terms of assembly, heterotrimer of A, B and C subunits.

It carries out the reaction L-glutamyl-tRNA(Gln) + L-glutamine + ATP + H2O = L-glutaminyl-tRNA(Gln) + L-glutamate + ADP + phosphate + H(+). The enzyme catalyses L-aspartyl-tRNA(Asn) + L-glutamine + ATP + H2O = L-asparaginyl-tRNA(Asn) + L-glutamate + ADP + phosphate + 2 H(+). Its function is as follows. Allows the formation of correctly charged Asn-tRNA(Asn) or Gln-tRNA(Gln) through the transamidation of misacylated Asp-tRNA(Asn) or Glu-tRNA(Gln) in organisms which lack either or both of asparaginyl-tRNA or glutaminyl-tRNA synthetases. The reaction takes place in the presence of glutamine and ATP through an activated phospho-Asp-tRNA(Asn) or phospho-Glu-tRNA(Gln). In Pseudothermotoga lettingae (strain ATCC BAA-301 / DSM 14385 / NBRC 107922 / TMO) (Thermotoga lettingae), this protein is Aspartyl/glutamyl-tRNA(Asn/Gln) amidotransferase subunit B.